Here is a 159-residue protein sequence, read N- to C-terminus: Ribosomal RNA large subunit methyltransferase H (159 aa).

Residues glycine 108 and 127 to 132 each bind S-adenosyl-L-methionine; that span reads FSKMTF.

It belongs to the RNA methyltransferase RlmH family. In terms of assembly, homodimer.

It localises to the cytoplasm. The catalysed reaction is pseudouridine(1915) in 23S rRNA + S-adenosyl-L-methionine = N(3)-methylpseudouridine(1915) in 23S rRNA + S-adenosyl-L-homocysteine + H(+). Specifically methylates the pseudouridine at position 1915 (m3Psi1915) in 23S rRNA. The chain is Ribosomal RNA large subunit methyltransferase H from Clostridium acetobutylicum (strain ATCC 824 / DSM 792 / JCM 1419 / IAM 19013 / LMG 5710 / NBRC 13948 / NRRL B-527 / VKM B-1787 / 2291 / W).